A 424-amino-acid chain; its full sequence is Subtilisin-like protease 2 (424 aa).

The N-terminal stretch at 1-17 (MQLLNLGLLLLLPFVAG) is a signal peptide. Residues 18 to 123 (EIAPQPEPLR…VHPDQHVYLA (106 aa)) constitute a propeptide that is removed on maturation. Residues 37–123 (QYIVTLKEGL…VHPDQHVYLA (87 aa)) form the Inhibitor I9 domain. The Peptidase S8 domain occupies 132–424 (RWGLGYMSSK…RKFTLPKNTK (293 aa)). Active-site charge relay system residues include D170 and H202. N-linked (GlcNAc...) asparagine glycosylation is found at N249, N262, and N350. S359 functions as the Charge relay system in the catalytic mechanism. N-linked (GlcNAc...) asparagine glycosylation is present at N390.

The protein belongs to the peptidase S8 family.

It is found in the secreted. In terms of biological role, secreted subtilisin-like serine protease with keratinolytic activity that contributes to pathogenicity. The polypeptide is Subtilisin-like protease 2 (SUB2) (Arthroderma otae (Microsporum canis)).